A 269-amino-acid chain; its full sequence is Protein NETWORKED 3A (269 aa).

The NAB domain maps to 6–87 (SKWWWIGNHN…ERYDLLRPSS (82 aa)). The segment at 87-113 (SVHKHGSDSESHEKSSTCDESSWSEAC) is disordered. Residues 91-103 (HGSDSESHEKSST) show a composition bias toward basic and acidic residues. The stretch at 155–214 (NGNSEMMKIEIERLREENKVYSEMVREKDEEKREAIRQMSVAIQMLKEENSELKKRVTNT) forms a coiled coil.

The protein belongs to the NET family.

The protein localises to the cytoplasm. The protein resides in the cytoskeleton. It is found in the nucleus membrane. In terms of biological role, plant-specific actin binding protein. May be part of a membrane-cytoskeletal adapter complex. The chain is Protein NETWORKED 3A from Arabidopsis thaliana (Mouse-ear cress).